The chain runs to 39 residues: Small basic protein 1 (39 aa).

Q1 is subject to Pyrrolidone carboxylic acid. 3 disulfides stabilise this stretch: C6–C32, C10–C26, and C14–C31.

Its subcellular location is the secreted. The sequence is that of Small basic protein 1 from Anas platyrhynchos (Mallard).